Reading from the N-terminus, the 592-residue chain is V-type ATP synthase alpha chain (592 aa).

233–240 (GPFGSGKT) serves as a coordination point for ATP.

It belongs to the ATPase alpha/beta chains family.

The enzyme catalyses ATP + H2O + 4 H(+)(in) = ADP + phosphate + 5 H(+)(out). Functionally, produces ATP from ADP in the presence of a proton gradient across the membrane. The V-type alpha chain is a catalytic subunit. In Clostridium botulinum (strain Okra / Type B1), this protein is V-type ATP synthase alpha chain.